We begin with the raw amino-acid sequence, 331 residues long: 6-phosphogluconolactonase (331 aa).

Belongs to the cycloisomerase 2 family.

The enzyme catalyses 6-phospho-D-glucono-1,5-lactone + H2O = 6-phospho-D-gluconate + H(+). It functions in the pathway carbohydrate degradation; pentose phosphate pathway; D-ribulose 5-phosphate from D-glucose 6-phosphate (oxidative stage): step 2/3. Catalyzes the hydrolysis of 6-phosphogluconolactone to 6-phosphogluconate. The chain is 6-phosphogluconolactonase from Buchnera aphidicola subsp. Baizongia pistaciae (strain Bp).